Here is a 616-residue protein sequence, read N- to C-terminus: KIF-binding protein (616 aa).

The disordered stretch occupies residues 52–78; the sequence is EEEEESEAEGKEERRDGPESGGRRGES. Residues 59–78 show a composition bias toward basic and acidic residues; the sequence is AEGKEERRDGPESGGRRGES.

This sequence belongs to the KIF-binding protein family.

It is found in the cytoplasm. It localises to the cytoskeleton. In terms of biological role, activator of KIF1B plus-end-directed microtubule motor activity. Required for organization of axonal microtubules, and axonal outgrowth and maintenance during peripheral and central nervous system development. This chain is KIF-binding protein, found in Xenopus tropicalis (Western clawed frog).